We begin with the raw amino-acid sequence, 313 residues long: Methionyl-tRNA formyltransferase (313 aa).

113 to 116 (SLLP) is a (6S)-5,6,7,8-tetrahydrofolate binding site.

The protein belongs to the Fmt family.

The catalysed reaction is L-methionyl-tRNA(fMet) + (6R)-10-formyltetrahydrofolate = N-formyl-L-methionyl-tRNA(fMet) + (6S)-5,6,7,8-tetrahydrofolate + H(+). Its function is as follows. Attaches a formyl group to the free amino group of methionyl-tRNA(fMet). The formyl group appears to play a dual role in the initiator identity of N-formylmethionyl-tRNA by promoting its recognition by IF2 and preventing the misappropriation of this tRNA by the elongation apparatus. The sequence is that of Methionyl-tRNA formyltransferase from Francisella tularensis subsp. novicida (strain U112).